The sequence spans 196 residues: Imidazole glycerol phosphate synthase subunit HisH (196 aa).

One can recognise a Glutamine amidotransferase type-1 domain in the interval 2-196 (NVVILDTGCA…AKLLKNFLEM (195 aa)). The Nucleophile role is filled by Cys-77. Catalysis depends on residues His-178 and Glu-180.

In terms of assembly, heterodimer of HisH and HisF.

It localises to the cytoplasm. The catalysed reaction is 5-[(5-phospho-1-deoxy-D-ribulos-1-ylimino)methylamino]-1-(5-phospho-beta-D-ribosyl)imidazole-4-carboxamide + L-glutamine = D-erythro-1-(imidazol-4-yl)glycerol 3-phosphate + 5-amino-1-(5-phospho-beta-D-ribosyl)imidazole-4-carboxamide + L-glutamate + H(+). It catalyses the reaction L-glutamine + H2O = L-glutamate + NH4(+). Its pathway is amino-acid biosynthesis; L-histidine biosynthesis; L-histidine from 5-phospho-alpha-D-ribose 1-diphosphate: step 5/9. In terms of biological role, IGPS catalyzes the conversion of PRFAR and glutamine to IGP, AICAR and glutamate. The HisH subunit catalyzes the hydrolysis of glutamine to glutamate and ammonia as part of the synthesis of IGP and AICAR. The resulting ammonia molecule is channeled to the active site of HisF. The protein is Imidazole glycerol phosphate synthase subunit HisH of Shigella flexneri.